A 266-amino-acid chain; its full sequence is 4-hydroxy-tetrahydrodipicolinate reductase (266 aa).

Residues 8 to 13 (GAAGRM) and glutamate 33 contribute to the NAD(+) site. Arginine 34 is an NADP(+) binding site. Residues 97–99 (GST) and 121–124 (APNM) contribute to the NAD(+) site. The active-site Proton donor/acceptor is histidine 154. Histidine 155 is a binding site for (S)-2,3,4,5-tetrahydrodipicolinate. The Proton donor role is filled by lysine 158. 164-165 (GT) serves as a coordination point for (S)-2,3,4,5-tetrahydrodipicolinate.

Belongs to the DapB family.

Its subcellular location is the cytoplasm. The catalysed reaction is (S)-2,3,4,5-tetrahydrodipicolinate + NAD(+) + H2O = (2S,4S)-4-hydroxy-2,3,4,5-tetrahydrodipicolinate + NADH + H(+). The enzyme catalyses (S)-2,3,4,5-tetrahydrodipicolinate + NADP(+) + H2O = (2S,4S)-4-hydroxy-2,3,4,5-tetrahydrodipicolinate + NADPH + H(+). It functions in the pathway amino-acid biosynthesis; L-lysine biosynthesis via DAP pathway; (S)-tetrahydrodipicolinate from L-aspartate: step 4/4. Its function is as follows. Catalyzes the conversion of 4-hydroxy-tetrahydrodipicolinate (HTPA) to tetrahydrodipicolinate. In Geobacter metallireducens (strain ATCC 53774 / DSM 7210 / GS-15), this protein is 4-hydroxy-tetrahydrodipicolinate reductase.